Reading from the N-terminus, the 691-residue chain is MPRSHNIEDYRNFGIMAHIDAGKTTTTERILYYSGKSHKIGEVHDGAATMDWMEQEQERGITITSAATTTFWNGKRLNIIDTPGHVDFTIEVERSLRVLDGAVCVLDGNQGVEPQTETVWRQADKYHVPRIVFVNKMDKIGADFYRCVDEIKTKVGGRPVCIQLPIGSESDFKGIIDLVRMKAVVWQDEALGAKYNDAEIPAELLAKAEEYRHILIETAVELDDDVMSAYLDGVEPDEETLKRLIRKAVRYITFIPILCGSAFKNKGVQPLLDAVVDYLPSPIDREAIKGVDVDTGEEVLRMPRDEDPFSMLAFKIMDDPFVGTLTFARVYSGHVESGTTVLNSTKDKKERIGRMLLMHANNREDVKEAYSGDIVALAGLKDTRTGDTLCDLSKPVILERMEFPEPVIEIAIEPKSKADQEKLGLALAKLAAEDPSFRVSTDQESGQTILKGMGELHLDIKVDILRRTYKVDANIGAPQVAYRERLTKRVEIDHTHKKQTGGTGQFARVIIVFEPNEAGAGNVFESKIVGGSVPKEFIPGVEKGINSVMGSGILAGFPVVDVKATLIDGGFHDVDSSVLAFEIAARAAFREALQKGGSVLLEPIMKVEVTTPEDYTGSVMGDLLGRRGQVQGQDMRGNAVVINAMVPLANMFGYVNQLRSFSQGRANYTMQFDHYEQVPAGEAAKVQAKYA.

The tr-type G domain maps to Glu-8 to Ile-283. GTP contacts are provided by residues Ala-17–Thr-24, Asp-81–His-85, and Asn-135–Asp-138.

It belongs to the TRAFAC class translation factor GTPase superfamily. Classic translation factor GTPase family. EF-G/EF-2 subfamily.

The protein localises to the cytoplasm. Catalyzes the GTP-dependent ribosomal translocation step during translation elongation. During this step, the ribosome changes from the pre-translocational (PRE) to the post-translocational (POST) state as the newly formed A-site-bound peptidyl-tRNA and P-site-bound deacylated tRNA move to the P and E sites, respectively. Catalyzes the coordinated movement of the two tRNA molecules, the mRNA and conformational changes in the ribosome. The polypeptide is Elongation factor G (Methylocella silvestris (strain DSM 15510 / CIP 108128 / LMG 27833 / NCIMB 13906 / BL2)).